A 280-amino-acid polypeptide reads, in one-letter code: uncharacterized protein (280 aa).

Positions 1-35 (MQGQVLKKVLKKYVHIGMCTLFLHAILLFPCVAQA) are cleaved as a signal peptide.

This is an uncharacterized protein from Treponema pallidum (strain Nichols).